Reading from the N-terminus, the 199-residue chain is Hematopoietic prostaglandin D synthase (199 aa).

A GST N-terminal domain is found at 2–79; sequence PNYKLLYFNM…YLTKNTDLAG (78 aa). Glutathione-binding positions include Tyr8, Arg14, Trp39, 49–51, and 63–64; these read GKI and QS. The GST C-terminal domain maps to 81–199; sequence TALEQCQADA…WILKRPQTKL (119 aa).

Belongs to the GST superfamily. Sigma family. As to quaternary structure, homodimer. The cofactor is glutathione. In terms of tissue distribution, expressed in skin and oviduct.

The protein localises to the cytoplasm. It catalyses the reaction prostaglandin H2 = prostaglandin D2. It carries out the reaction RX + glutathione = an S-substituted glutathione + a halide anion + H(+). The catalysed reaction is 2-glyceryl-prostaglandin H2 = 2-glyceryl-prostaglandin D2. Its function is as follows. Bifunctional enzyme which catalyzes both the conversion of PGH2 to PGD2, a prostaglandin involved in smooth muscle contraction/relaxation and a potent inhibitor of platelet aggregation, and the conjugation of glutathione with a wide range of aryl halides and organic isothiocyanates. Also exhibits low glutathione-peroxidase activity. In Mus musculus (Mouse), this protein is Hematopoietic prostaglandin D synthase.